Consider the following 166-residue polypeptide: Bacterial non-heme ferritin (166 aa).

In terms of domain architecture, Ferritin-like diiron spans 2–145 (LSKNLLEALN…THINYLTRIG (144 aa)). The Fe cation site is built by glutamate 17, glutamate 50, histidine 53, glutamate 94, and glutamine 127.

Belongs to the ferritin family. Prokaryotic subfamily.

It localises to the cytoplasm. It carries out the reaction 4 Fe(2+) + O2 + 6 H2O = 4 iron(III) oxide-hydroxide + 12 H(+). Its function is as follows. Iron-storage protein. The chain is Bacterial non-heme ferritin (ftnA) from Staphylococcus aureus (strain USA300).